Reading from the N-terminus, the 78-residue chain is DNA-directed RNA polymerase subunit Rpo5 (78 aa).

The protein belongs to the archaeal Rpo5/eukaryotic RPB5 RNA polymerase subunit family. In terms of assembly, part of the RNA polymerase complex.

It is found in the cytoplasm. It carries out the reaction RNA(n) + a ribonucleoside 5'-triphosphate = RNA(n+1) + diphosphate. Its function is as follows. DNA-dependent RNA polymerase (RNAP) catalyzes the transcription of DNA into RNA using the four ribonucleoside triphosphates as substrates. This Methanosarcina mazei (strain ATCC BAA-159 / DSM 3647 / Goe1 / Go1 / JCM 11833 / OCM 88) (Methanosarcina frisia) protein is DNA-directed RNA polymerase subunit Rpo5.